A 795-amino-acid chain; its full sequence is Protein Jade-3 (795 aa).

Low complexity predominate over residues 1–25 (MKRLRTPSSSDSSDNESPSTSFSSN). Residues 1–41 (MKRLRTPSSSDSSDNESPSTSFSSNKYGSKPGTPASAQKKP) form a disordered region. The segment at 201–251 (DVICDVCRSPDSEEGNDMVFCDKCNICVHQACYGIVKVPDGNWLCRTCVLG) adopts a PHD-type 1 zinc-finger fold. The C2HC pre-PHD-type zinc-finger motif lies at 253-287 (TPQCLLCPKTGGAMKATRAGTKWAHVSCALWIPEV). Residues 311–367 (LICSLCKLKTGACIQCSVKNCTIPFHVTCAFEHSLEMKTILDEGDEVKFKSYCLKHS) form a PHD-type 2 zinc finger. Disordered stretches follow at residues 630 to 654 (HGQS…NGIL), 667 to 687 (AASE…SGFH), and 714 to 795 (FEKN…SVQR). Composition is skewed to polar residues over residues 678 to 687 (SGKSQSSGFH) and 720 to 732 (KSSG…STER).

It belongs to the JADE family. Component of the HBO1 complex.

Its function is as follows. Scaffold subunit of some HBO1 complexes, which have a histone H4 acetyltransferase activity. The sequence is that of Protein Jade-3 (jade3) from Danio rerio (Zebrafish).